The primary structure comprises 139 residues: Heat shock protein homolog C338.06c (139 aa).

One can recognise a sHSP domain in the interval 27-139 (AWLSCWGPAL…EFTTRIVEIQ (113 aa)).

It belongs to the small heat shock protein (HSP20) family.

The protein resides in the mitochondrion. The polypeptide is Heat shock protein homolog C338.06c (Schizosaccharomyces pombe (strain 972 / ATCC 24843) (Fission yeast)).